The chain runs to 210 residues: RNA binding protein, mRNA processing factor 2 (210 aa).

Positions 1 to 10 (MSNLKPDVEH) are enriched in basic and acidic residues. Residues 1 to 25 (MSNLKPDVEHCTGAGTGTGTGPSGP) form a disordered region. Ser-2 is modified (N-acetylserine). In terms of domain architecture, RRM spans 31-108 (RTLFVSGLPV…QTLRLEFAKA (78 aa)). The interval 41 to 51 (DIKPRELYLLF) is important for homodimerization.

As to quaternary structure, homodimer. Interacts with EEF2.

It localises to the cytoplasm. The protein resides in the nucleus. The protein localises to the stress granule. RNA-binding protein involved in the regulation of smooth muscle cell differentiation and proliferation in the gastrointestinal system. Binds NOG mRNA, the major inhibitor of the bone morphogenetic protein (BMP) pathway. Mediates an increase of NOG mRNA levels, thereby contributing to the negative regulation of BMP signaling pathway and promoting reversible dedifferentiation and proliferation of smooth muscle cells. Acts as a pre-mRNA alternative splicing regulator. Mediates ACTN1 and FLNB alternative splicing. Likely binds to mRNA tandem CAC trinucleotide or CA dinucleotide motifs. In Rattus norvegicus (Rat), this protein is RNA binding protein, mRNA processing factor 2 (Rbpms2).